Consider the following 65-residue polypeptide: UPF0434 protein BBta_0300 (65 aa).

Belongs to the UPF0434 family.

This chain is UPF0434 protein BBta_0300, found in Bradyrhizobium sp. (strain BTAi1 / ATCC BAA-1182).